The primary structure comprises 233 residues: 2-C-methyl-D-erythritol 4-phosphate cytidylyltransferase (233 aa).

The protein belongs to the IspD/TarI cytidylyltransferase family. IspD subfamily.

It catalyses the reaction 2-C-methyl-D-erythritol 4-phosphate + CTP + H(+) = 4-CDP-2-C-methyl-D-erythritol + diphosphate. Its pathway is isoprenoid biosynthesis; isopentenyl diphosphate biosynthesis via DXP pathway; isopentenyl diphosphate from 1-deoxy-D-xylulose 5-phosphate: step 2/6. Its function is as follows. Catalyzes the formation of 4-diphosphocytidyl-2-C-methyl-D-erythritol from CTP and 2-C-methyl-D-erythritol 4-phosphate (MEP). This chain is 2-C-methyl-D-erythritol 4-phosphate cytidylyltransferase, found in Thiobacillus denitrificans (strain ATCC 25259 / T1).